Consider the following 876-residue polypeptide: Alanine--tRNA ligase (876 aa).

Zn(2+)-binding residues include histidine 563, histidine 567, cysteine 665, and histidine 669.

Belongs to the class-II aminoacyl-tRNA synthetase family. The cofactor is Zn(2+).

Its subcellular location is the cytoplasm. The catalysed reaction is tRNA(Ala) + L-alanine + ATP = L-alanyl-tRNA(Ala) + AMP + diphosphate. In terms of biological role, catalyzes the attachment of alanine to tRNA(Ala) in a two-step reaction: alanine is first activated by ATP to form Ala-AMP and then transferred to the acceptor end of tRNA(Ala). Also edits incorrectly charged Ser-tRNA(Ala) and Gly-tRNA(Ala) via its editing domain. The polypeptide is Alanine--tRNA ligase (Shouchella clausii (strain KSM-K16) (Alkalihalobacillus clausii)).